We begin with the raw amino-acid sequence, 161 residues long: Ribonuclease H (161 aa).

In terms of domain architecture, RNase H type-1 spans 2-141; sequence TNNEIIAATD…ADSLARQAAN (140 aa). Mg(2+)-binding residues include D11, E46, D69, and D133.

Belongs to the RNase H family. In terms of assembly, monomer. Requires Mg(2+) as cofactor.

It localises to the cytoplasm. The catalysed reaction is Endonucleolytic cleavage to 5'-phosphomonoester.. Its function is as follows. Endonuclease that specifically degrades the RNA of RNA-DNA hybrids. In Tropheryma whipplei (strain TW08/27) (Whipple's bacillus), this protein is Ribonuclease H.